Here is a 372-residue protein sequence, read N- to C-terminus: tRNA pseudouridine synthase D (372 aa).

Catalysis depends on aspartate 85, which acts as the Nucleophile. A TRUD domain is found at 160–330 (GFTNYFGYQR…MQGSRRFMWG (171 aa)).

Belongs to the pseudouridine synthase TruD family.

It catalyses the reaction uridine(13) in tRNA = pseudouridine(13) in tRNA. Its function is as follows. Responsible for synthesis of pseudouridine from uracil-13 in transfer RNAs. The chain is tRNA pseudouridine synthase D from Campylobacter jejuni (strain RM1221).